A 360-amino-acid chain; its full sequence is Zinc finger protein ztf-2 (360 aa).

The tract at residues 19-41 (LSSPEKEHRRKRRRGEVANPSNT) is disordered. 3 consecutive C2H2-type zinc fingers follow at residues 87–109 (RTCS…KRVH), 115–138 (FKCR…AKTH), and 180–203 (YRCQ…SHLH). A compositionally biased stretch (low complexity) spans 248-260 (PLSPCRSESSSDS). The interval 248-272 (PLSPCRSESSSDSGIQTDPEEEASI) is disordered.

Expressed in pharyngeal epithelium/arcade, which connects the pharynx to the mouth.

Its function is as follows. Transcription factor. Represses gene expression, probably via binding to DNA consensus sequence 5'-[AT][CT]TTCC[AC][AG]-3' in promoter regions. May play a role in pharynx morphogenesis. This chain is Zinc finger protein ztf-2, found in Caenorhabditis elegans.